Reading from the N-terminus, the 1004-residue chain is Copper-transporting ATPase (1004 aa).

Topologically, residues 1-262 (MREVILAVHG…FWKKNSIKST (262 aa)) are cytoplasmic. HMA domains follow at residues 2 to 67 (REVI…FDCE) and 80 to 146 (KEGL…FDSN). The Cu(+) site is built by cysteine 13, cysteine 16, cysteine 91, and cysteine 94. A helical transmembrane segment spans residues 263–283 (LLAIICMLLYMIVPMMWPTIV). The Lumenal, vesicle segment spans residues 284 to 303 (QDRIFPYKETSFVRGLFYRD). A helical membrane pass occupies residues 304–324 (ILGVILASYIQFSVGFYFYKA). At 325–335 (AWASLKHGSGT) the chain is on the cytoplasmic side. Residues 336–356 (MDTLVCVSTTCAYTFSVFSLV) form a helical membrane-spanning segment. At 357-370 (HNMFHPSSTGKLPR) the chain is on the lumenal, vesicle side. Residues 371–391 (IVFDTSIMIISYISIGKYLET) traverse the membrane as a helical segment. Residues 392-528 (LAKSQTSTAL…IQGYADYLAS (137 aa)) are Cytoplasmic-facing. A helical transmembrane segment spans residues 529-549 (IFVPGILILAVLTFFIWCFIL). Residues 550–577 (NISANPPVAFTANTKADNFFICLQTATS) are Lumenal, vesicle-facing. Residues 578-598 (VVIVACPCALGLATPTAIMVG) traverse the membrane as a helical segment. Over 599–901 (TGVGAQNGVL…LKTFKRIKLN (303 aa)) the chain is Cytoplasmic. Residue aspartate 627 is the 4-aspartylphosphate intermediate of the active site. Mg(2+) contacts are provided by aspartate 838 and aspartate 842. The helical transmembrane segment at 902–924 (LFWALCYNIFMIPIAMGVLIPWG) threads the bilayer. Topologically, residues 925-927 (ITL) are lumenal, vesicle. Residues 928–950 (PPMLAGLAMAFSSVSVVLSSLML) traverse the membrane as a helical segment. Topologically, residues 951–1004 (KKWTPPDIESHGISDFKSKFSIGNFWSRLFSTRAIAGEQDIESQAGLMSNEEVL) are cytoplasmic.

The protein belongs to the cation transport ATPase (P-type) (TC 3.A.3) family. Type IB subfamily. As to quaternary structure, interacts with the copper chaperone ATX1 via the copper anion.

The protein resides in the golgi apparatus. The protein localises to the trans-Golgi network membrane. The catalysed reaction is Cu(+)(in) + ATP + H2O = Cu(+)(out) + ADP + phosphate + H(+). In terms of biological role, copper-transporting P-type ATPase necessary for the proper uptake of iron. Required for export of copper from cytosol into extracytosolic compartment. Retrieves copper from the metallochaperone ATX1 and incorporates it into trans-Golgi vesicles where they are acquired by the cell-surface iron transporter FET3. Required the production of inositolphosphorylceramide D, probably by delivering copper to a yet to be identified enzyme. This is Copper-transporting ATPase from Saccharomyces cerevisiae (strain ATCC 204508 / S288c) (Baker's yeast).